We begin with the raw amino-acid sequence, 297 residues long: Cell division protein FtsQ (297 aa).

At 1–33 (MRPLSFRRRTAQARPDPAPSRLSYRVQRLLLTP) the chain is on the cytoplasmic side. Residues 34–54 (LFHALIRVGLPAFVLAFGVGW) form a helical membrane-spanning segment. Residues 55–297 (LLQNQELRDE…IRGLTNDRIE (243 aa)) lie on the Periplasmic side of the membrane. In terms of domain architecture, POTRA spans 82–150 (FMVNAMSVSG…GILAIEIVER (69 aa)).

This sequence belongs to the FtsQ/DivIB family. FtsQ subfamily.

The protein resides in the cell inner membrane. Functionally, essential cell division protein. In Dinoroseobacter shibae (strain DSM 16493 / NCIMB 14021 / DFL 12), this protein is Cell division protein FtsQ.